The chain runs to 210 residues: Synaptosomal-associated protein 23 (210 aa).

At Met1 the chain carries N-acetylmethionine. Phosphoserine occurs at positions 5, 20, 23, and 34. In terms of domain architecture, t-SNARE coiled-coil homology 1 spans 14–76; the sequence is HQVTDESLES…REAEKTLTEL (63 aa). The stretch at 23–76 forms a coiled coil; that stretch reads STRRILGLAIESQDAGIKTITMLDEQGEQLNRIEEGMDQINKDMREAEKTLTEL. S-palmitoyl cysteine attachment occurs at residues Cys79, Cys80, Cys83, Cys85, and Cys87. Positions 104-135 are disordered; the sequence is GDGGDNSPSNVVSKQPSRITNGQPQQTTGAAS. A compositionally biased stretch (polar residues) spans 109–133; it reads NSPSNVVSKQPSRITNGQPQQTTGA. A phosphoserine mark is found at Ser110 and Ser160. Residues 145–207 form the t-SNARE coiled-coil homology 2 domain; sequence DAREDEMEEN…DIANTRAKKL (63 aa).

It belongs to the SNAP-25 family. Homotetramer (via coiled-coil domain), also forms heterotetramers with STX4 and VAMP3. Found in a complex with VAMP8 and STX1A. Found in a complex with VAMP8 and STX4 in pancreas. Interacts simultaneously with SNAPIN and SYN4. Interacts with STX1A. Interacts with STX12. Interacts tightly to multiple syntaxins and synaptobrevins/VAMPs. Interacts with ZDHHC13 (via ANK repeats). Interacts with ZDHHC17 (via ANK repeats). (Microbial infection) Targeted and hydrolyzed by C.botulinum neurotoxin type A (BoNT/A, botA) which hydrolyzes the 202-Thr-|-Arg-203 bond; the in vitro reaction is not highly efficient. Post-translationally, (Microbial infection) Targeted and hydrolyzed by C.botulinum neurotoxin type E (BoNT/E) which hydrolyzes the 185-Arg-|-Ile-186 bond; the in vitro reaction is more efficient than that of BoNT/A. As to expression, expressed in non-neuronal tissues.

Its subcellular location is the cell membrane. The protein localises to the synapse. The protein resides in the synaptosome. In terms of biological role, essential component of the high affinity receptor for the general membrane fusion machinery and an important regulator of transport vesicle docking and fusion. The chain is Synaptosomal-associated protein 23 (Snap23) from Mus musculus (Mouse).